Here is a 394-residue protein sequence, read N- to C-terminus: Phosphoglycerate kinase (394 aa).

Substrate is bound by residues 21-23 (DFN), Arg36, 59-62 (HLGR), Arg118, and Arg151. Phosphoserine is present on Ser183. Residues Lys201 and Gly292 each coordinate ATP. Thr299 is modified (phosphothreonine). ATP is bound by residues Glu323 and 350 to 353 (GGDS).

Belongs to the phosphoglycerate kinase family. Monomer.

Its subcellular location is the cytoplasm. The enzyme catalyses (2R)-3-phosphoglycerate + ATP = (2R)-3-phospho-glyceroyl phosphate + ADP. Its pathway is carbohydrate degradation; glycolysis; pyruvate from D-glyceraldehyde 3-phosphate: step 2/5. In Bacillus thuringiensis subsp. konkukian (strain 97-27), this protein is Phosphoglycerate kinase.